Consider the following 272-residue polypeptide: Ribosomal RNA small subunit methyltransferase J (272 aa).

S-adenosyl-L-methionine contacts are provided by residues 120-121 (RD), 136-137 (ER), 171-172 (SS), and Asp-188.

It belongs to the methyltransferase superfamily. RsmJ family.

Its subcellular location is the cytoplasm. The catalysed reaction is guanosine(1516) in 16S rRNA + S-adenosyl-L-methionine = N(2)-methylguanosine(1516) in 16S rRNA + S-adenosyl-L-homocysteine + H(+). Its function is as follows. Specifically methylates the guanosine in position 1516 of 16S rRNA. The polypeptide is Ribosomal RNA small subunit methyltransferase J (Colwellia psychrerythraea (strain 34H / ATCC BAA-681) (Vibrio psychroerythus)).